Reading from the N-terminus, the 294-residue chain is Ribosomal RNA small subunit methyltransferase A (294 aa).

6 residues coordinate S-adenosyl-L-methionine: Asn33, Leu35, Gly60, Glu81, Asp106, and Asn131.

Belongs to the class I-like SAM-binding methyltransferase superfamily. rRNA adenine N(6)-methyltransferase family. RsmA subfamily.

The protein localises to the cytoplasm. It catalyses the reaction adenosine(1518)/adenosine(1519) in 16S rRNA + 4 S-adenosyl-L-methionine = N(6)-dimethyladenosine(1518)/N(6)-dimethyladenosine(1519) in 16S rRNA + 4 S-adenosyl-L-homocysteine + 4 H(+). Its function is as follows. Specifically dimethylates two adjacent adenosines (A1518 and A1519) in the loop of a conserved hairpin near the 3'-end of 16S rRNA in the 30S particle. May play a critical role in biogenesis of 30S subunits. In Lactococcus lactis subsp. lactis (strain IL1403) (Streptococcus lactis), this protein is Ribosomal RNA small subunit methyltransferase A.